Reading from the N-terminus, the 212-residue chain is Large ribosomal subunit protein uL3 (212 aa).

Positions 136–155 (THGNSLSHRSNGSIGQNQTP) are enriched in polar residues. A disordered region spans residues 136-157 (THGNSLSHRSNGSIGQNQTPGR). Gln153 carries the N5-methylglutamine modification.

It belongs to the universal ribosomal protein uL3 family. In terms of assembly, part of the 50S ribosomal subunit. Forms a cluster with proteins L14 and L19. Post-translationally, methylated by PrmB.

One of the primary rRNA binding proteins, it binds directly near the 3'-end of the 23S rRNA, where it nucleates assembly of the 50S subunit. The polypeptide is Large ribosomal subunit protein uL3 (Shewanella putrefaciens (strain CN-32 / ATCC BAA-453)).